A 1024-amino-acid polypeptide reads, in one-letter code: Seizure 6-like protein (1024 aa).

A signal peptide spans 1-28 (MPAARPPAAGLRGISLFLALLLGSPAAA). At 29-958 (LERDALPEGD…ETSLEGGNMA (930 aa)) the chain is on the extracellular side. Disordered regions lie at residues 33–77 (ALPE…SQSA), 108–184 (RPKH…EVPL), and 212–234 (AHTLPQRPEPGEPGPDMAQEAPQ). Ser-49 carries O-linked (GalNAc...) serine glycosylation. The span at 56 to 66 (SPGKEHPEERV) shows a compositional bias: basic and acidic residues. The segment covering 110-120 (KHALPPKKKLP) has biased composition (basic residues). The segment covering 138-162 (SAATVQRAGSQPASQGLDLLSSSTE) has biased composition (polar residues). O-glycosylated at one site regions lie at residues 147–161 (SQPASQGLDLLSSST) and 176–180 (SEEAS). Cys-281 and Cys-308 are disulfide-bonded. One can recognise a CUB 1 domain in the interval 281 to 389 (CSVSFSNPEG…GTFQLHYQAF (109 aa)). N-linked (GlcNAc...) asparagine glycans are attached at residues Asn-311, Asn-328, and Asn-350. Positions 391–450 (LSCNFPRRPDSGDVTVMDLHSGGVAHFHCHLGYELQGAKMLTCINASKPHWSSQEPICSA) constitute a Sushi 1 domain. Intrachain disulfides connect Cys-393–Cys-433 and Cys-419–Cys-448. Asn-435, Asn-458, Asn-474, Asn-514, Asn-576, Asn-618, Asn-674, and Asn-742 each carry an N-linked (GlcNAc...) asparagine glycan. Residues 452-562 (CGGAVHNATI…STFNIRFEAF (111 aa)) form the CUB 2 domain. One can recognise a Sushi 2 domain in the interval 565–626 (GHCYEPYIQN…WNDTEPLCRA (62 aa)). 2 disulfide bridges follow: Cys-567/Cys-609 and Cys-594/Cys-624. Positions 628 to 739 (CGGELSAVAG…QGFIMNYIEV (112 aa)) constitute a CUB 3 domain. Sushi domains are found at residues 743–802 (DSCS…FCEK), 804–867 (MYCT…HCVS), and 871–932 (LACD…VCKV). 6 cysteine pairs are disulfide-bonded: Cys-745/Cys-787, Cys-773/Cys-800, Cys-806/Cys-848, Cys-834/Cys-865, Cys-873/Cys-915, and Cys-901/Cys-930. The chain crosses the membrane as a helical span at residues 959–979 (LAIFIPVLIISLLLGGAYIYI). Over 980-1024 (TRCRYYSNLRLPLMYSHPYSQITVETEFDNPIYETGETREYEVSI) the chain is Cytoplasmic.

The protein belongs to the SEZ6 family. Post-translationally, O-glycosylated. Widely expressed, including adult and fetal brains and lungs. Not expressed in all lung cancer cell lines.

The protein resides in the endoplasmic reticulum membrane. Its function is as follows. May contribute to specialized endoplasmic reticulum functions in neurons. The protein is Seizure 6-like protein (SEZ6L) of Homo sapiens (Human).